A 250-amino-acid polypeptide reads, in one-letter code: Probable transcriptional regulatory protein SCO1521 (250 aa).

It belongs to the TACO1 family.

The protein resides in the cytoplasm. The protein is Probable transcriptional regulatory protein SCO1521 of Streptomyces coelicolor (strain ATCC BAA-471 / A3(2) / M145).